Here is a 280-residue protein sequence, read N- to C-terminus: ESX-1 secretion-associated protein EspJ (280 aa).

Residue serine 70 is modified to Phosphoserine. 2 stretches are compositionally biased toward low complexity: residues 167–181 and 246–280; these read QTIS…QSAQ and PAQA…TTTL. Positions 167 to 280 are disordered; that stretch reads QTISQTAQQA…TPAPSTTTTL (114 aa).

Residues 76-280 interact with EsxB and an artificial EsxB-EsxA heterodimer. Post-translationally, phosphorylated at Ser-70.

The protein localises to the secreted. Its function is as follows. Could be involved in regulation of growth and intracellular survival. This is ESX-1 secretion-associated protein EspJ from Mycobacterium tuberculosis (strain ATCC 25618 / H37Rv).